The following is a 473-amino-acid chain: Reticulon-4 receptor (473 aa).

Positions 1-26 (MKRASSGGSRLLAWVLWLQAWRVATP) are cleaved as a signal peptide. Disulfide bonds link Cys-27–Cys-33 and Cys-31–Cys-43. Positions 27–57 (CPGACVCYNEPKVTTSCPQQGLQAVPTGIPA) constitute an LRRNT domain. LRR repeat units follow at residues 58 to 79 (SSQRIFLHGNRISHVPAASFQS), 82 to 103 (NLTILWLHSNALARIDAAAFTG), 106 to 128 (LLEQLDLSDNAQLHVVDPTTFHG), 131 to 152 (HLHTLHLDRCGLRELGPGLFRG), 155 to 176 (ALQYLYLQDNNLQALPDNTFRD), 179 to 200 (NLTHLFLHGNRIPSVPEHAFRG), 203 to 224 (SLDRLLLHQNHVARVHPHAFRD), and 227 to 248 (RLMTLYLFANNLSMLPAEVLMP). The N-linked (GlcNAc...) asparagine glycan is linked to Asn-82. N-linked (GlcNAc...) asparagine glycosylation is present at Asn-179. One can recognise an LRRCT domain in the interval 260 to 311 (NPWVCDCRARPLWAWLQKFRGSSSEVPCNLPQRLADRDLKRLAASDLEGCAV). Disulfide bonds link Cys-264-Cys-287, Cys-266-Cys-335, and Cys-309-Cys-336. The tract at residues 346 to 446 (VLEPGRPASA…GASGTGDAEG (101 aa)) is disordered. Asn-372 is a glycosylation site (N-linked (GlcNAc...) asparagine). Residues 413–429 (PRRRPGCSRKNRTRSHC) are compositionally biased toward basic residues. Residues 434–445 (AGSGASGTGDAE) are compositionally biased toward gly residues. Ser-447 carries GPI-anchor amidated serine lipidation. A propeptide spans 448-473 (GALPALACSLAPLGLALVLWTVLGPC) (removed in mature form).

This sequence belongs to the Nogo receptor family. Homodimer. Interacts with MAG. Interacts with RTN4. Interacts with NGFR. Interacts with LINGO1. Interacts with KIAA0319L. Interacts with OLFM1; this inhibits interaction with LINGO1 and NGFR. Interacts with OMG. Post-translationally, N-glycosylated. O-glycosylated. Contains terminal sialic acid groups on its glycan chains. In terms of tissue distribution, detected in embryonic hippocampus neurons. Detected in brain (at protein level). Detected in neurons in the neocortex, in hippocampus, dorsal thalamus, cerebellum granule cell layer and the mitral cell layer in the olfactory bulb. Detected in brain, dorsal root ganglion and heart.

The protein resides in the cell membrane. Its subcellular location is the membrane raft. The protein localises to the cell projection. It localises to the dendrite. It is found in the axon. The protein resides in the perikaryon. Receptor for RTN4, OMG and MAG. Functions as a receptor for the sialylated gangliosides GT1b and GM1. Besides, functions as a receptor for chondroitin sulfate proteoglycans. Can also bind heparin. Intracellular signaling cascades are triggered via the coreceptor NGFR. Signaling mediates activation of Rho and downstream reorganization of the actin cytoskeleton. Mediates axonal growth inhibition. Mediates axonal growth inhibition and plays a role in regulating axon regeneration and neuronal plasticity in the adult central nervous system. Plays a role in postnatal brain development. Required for normal axon migration across the brain midline and normal formation of the corpus callosum. Protects motoneurons against apoptosis; protection against apoptosis is probably mediated via interaction with MAG. Acts in conjunction with RTN4 and LINGO1 in regulating neuronal precursor cell motility during cortical development. Like other family members, plays a role in restricting the number dendritic spines and the number of synapses that are formed during brain development. The protein is Reticulon-4 receptor (Rtn4r) of Mus musculus (Mouse).